Consider the following 326-residue polypeptide: Cell surface glycoprotein CD200 receptor 1 (326 aa).

The N-terminal stretch at 1–25 (MFCFWRTSALAVLLIWGVFVAGSSC) is a signal peptide. The Extracellular segment spans residues 26–238 (TDKNQTTQNN…SRGGNQSLRP (213 aa)). N-linked (GlcNAc...) asparagine glycosylation is found at Asn29, Asn34, Asn35, Asn44, Asn93, Asn101, Asn159, Asn192, Asn207, Asn221, and Asn233. An Ig-like V-type domain is found at 51–136 (IGTKALLCCF…YTCETVTPEG (86 aa)). Disulfide bonds link Cys58–Cys129 and Cys82–Cys97. The Ig-like C2-type domain maps to 138 to 229 (FEKNYDLQVL…GNQSLSIELS (92 aa)). 2 disulfides stabilise this stretch: Cys164–Cys213 and Cys183–Cys201. Residues 239-259 (YIPYIIPSIIILIIIGCICLL) traverse the membrane as a helical segment. Over 260-326 (KISGFRKCKL…DCLTLSAIGI (67 aa)) the chain is Cytoplasmic.

The protein belongs to the CD200R family. CD200 and CD200R1 interact via their respective N-terminal Ig-like domains. In terms of tissue distribution, expressed in granulocytes, monocytes, most T-cells and a subset of NK, NKT and B-cells (at protein level). Expressed in the spleen, lung, liver, testis, bone marrow, lymph nodes, spinal cord, kidney, uterus and small intestine. Expressed in mast and dendritic cells. Expressed in the lung of N.brasiliensis-infected mice.

The protein localises to the cell membrane. Inhibitory receptor for the CD200/OX2 cell surface glycoprotein. Limits inflammation by inhibiting the expression of pro-inflammatory molecules including TNF-alpha, interferons, and inducible nitric oxide synthase (iNOS) in response to selected stimuli. This Mus musculus (Mouse) protein is Cell surface glycoprotein CD200 receptor 1 (Cd200r1).